The primary structure comprises 294 residues: P32 adhesin (294 aa).

A run of 2 helical transmembrane segments spans residues 11–31 (LVGV…VGLT) and 66–86 (VVGA…GIGI). 2 consecutive repeat copies span residues 172-193 (GGPM…PPQM) and 194-214 (GGMP…PPQM). The segment at 172-214 (GGPMQPNQMGMRPGFNQMPPQMGGMPPNQMGMRPGFNQMPPQM) is 2 X 22 AA repeats. The segment at 234 to 294 (RPGFRPQPGG…AGFPPQNGPR (61 aa)) is disordered. Positions 241-256 (PGGGVPMGNKAGGGFN) are enriched in gly residues.

The protein localises to the cell projection. It is found in the attachment organelle membrane. Its function is as follows. Adhesin necessary for successful cytadherence and virulence. The polypeptide is P32 adhesin (mgc2) (Mycoplasmoides gallisepticum (strain R(low / passage 15 / clone 2)) (Mycoplasma gallisepticum)).